The primary structure comprises 447 residues: MRSVSYVQRVALEFSGSLFPHAICLGDVDNDTLNELVVGDTSGKVSVYKNDDSRPWLTCSCQGMLTCVGVGDVCNKGKNLLVAVSAEGWFHLFDLTPAKVLDASGHHETLIGEEQRPVFKQHIPANTKVMLISDIDGDGCRELVVGYTDRVVRAFRWEELGEGPEHLTGQLVSLKKWMLEGQVDSLSVTLGPLGLPELMVSQPGCAYAILLCTWKKDTGSPPASEGPTDGSRETPAARDVVLHQTSGRIHNKNVSTHLIGNIKQGHGTESSGSGLFALCTLDGTLKLMEEMEEADKLLWSVQVDHQLFALEKLDVTGNGHEEVVACAWDGQTYIIDHNRTVVRFQVDENIRAFCAGLYACKEGRNSPCLVYVTFNQKIYVYWEVQLERMESTNLVKLLETKPEYHSLLQELGVDPDDLPVTRALLHQTLYHPDQPPQCAPSSLQDPT.

One copy of the FG-GAP 1; atypical repeat lies at 19-48 (FPHAICLGDVDNDTLNELVVGDTSGKVSVY). S104 carries the phosphoserine modification. Residues 126–155 (NTKVMLISDIDGDGCRELVVGYTDRVVRAF) form an FG-GAP 2; atypical repeat. The residue at position 220 (S220) is a Phosphoserine.

As to quaternary structure, part of the KICSTOR complex composed of KPTN, ITFG2, KICS2 and SZT2. SZT2 probably serves as a link between the other three proteins in the KICSTOR complex and may mediate the direct interaction with the GATOR complex via GATOR1. The KICSTOR complex interacts directly with the GATOR1 complex and most probably indirectly with the GATOR2 complex in an amino acid-independent manner.

It localises to the lysosome membrane. As part of the KICSTOR complex functions in the amino acid-sensing branch of the TORC1 signaling pathway. Recruits, in an amino acid-independent manner, the GATOR1 complex to the lysosomal membranes and allows its interaction with GATOR2 and the RAG GTPases. Functions upstream of the RAG GTPases and is required to negatively regulate mTORC1 signaling in absence of amino acids. In absence of the KICSTOR complex mTORC1 is constitutively localized to the lysosome and activated. The KICSTOR complex is also probably involved in the regulation of mTORC1 by glucose. The sequence is that of KICSTOR complex protein ITFG2 from Homo sapiens (Human).